The chain runs to 137 residues: Competence protein ComGG (137 aa).

The helical transmembrane segment at 10–30 threads the bilayer; it reads GVLLYAVTIAAIFSLLLQFYL. A disordered region spans residues 106-137; sequence EKRDKKEEVATDSSEKVEKKKSEEKPEKKENS.

In terms of assembly, the transformation pili are flexible filaments, consisting mainly of the major pilin ComGC and smaller amounts of the minor pilins, including at least ComGD, ComGF and ComGG, and perhaps ComGE. Interacts with ComGC; the interaction is probably direct. Interacts with ComGD. Interacts with ComGE. Interacts with ComGF. May act as a link between ComGC, ComGD and ComGF.

Its subcellular location is the fimbrium. It is found in the cell membrane. In terms of biological role, required for formation of the type IV-like pilus (T4P) that plays a role in transformation. Transformation pili are dynamically extended and retracted, perhaps thereby promoting DNA uptake and transformation. Required for transformation. In Streptococcus pneumoniae (strain ATCC BAA-255 / R6), this protein is Competence protein ComGG.